A 218-amino-acid chain; its full sequence is Response regulator UvrY (218 aa).

A Response regulatory domain is found at N3–Y119. D54 bears the 4-aspartylphosphate mark. In terms of domain architecture, HTH luxR-type spans T143–G208. The H-T-H motif DNA-binding region spans V167–Y186.

In terms of processing, phosphorylated and activated by BarA.

Its subcellular location is the cytoplasm. Functionally, member of the two-component regulatory system UvrY/BarA involved in the regulation of carbon metabolism via the CsrA/CsrB regulatory system. UvrY activates the transcription of the untranslated csrB RNA and of barA, in an autoregulatory loop. Mediates the effects of CsrA on csrB RNA by BarA-dependent and BarA-independent mechanisms. This Escherichia coli (strain K12) protein is Response regulator UvrY (uvrY).